Consider the following 377-residue polypeptide: MTLQAIKYNNGDLAIIDQLQLPHVEKYVTIHNSEEGWHAIKDMRVRGAPAIAIVAALALASELHGLMAHDKLSPEAEDVQTFVVEKLRYLVSSRPTAVNLSDAARKLEVVVAQSARAPGATGKTVATAFIQAAEEMLVKDVEDNKKIGEHGAQWILKNSLEGHGKATVLTHCNTGSLATSGYGTALGVIRSLASADSLQHAYCTETRPYNQGSRLTAFELVHDALPATLITDSMAAALLASKKAGVNAIVVGADRVAANGDTANKIGTYGLAVLAKYHNVKFLVAAPLTTIDLNTKSGDQIVIEERLASEVTSIRGPRDNTGSEDVELVTVCTAAKGINVWNPAFDVTPAALIDGIITEKGVMEKDSAGMFHLEELF.

The active-site Proton donor is D254.

The protein belongs to the eIF-2B alpha/beta/delta subunits family. MtnA subfamily.

It is found in the cytoplasm. It localises to the nucleus. The catalysed reaction is 5-(methylsulfanyl)-alpha-D-ribose 1-phosphate = 5-(methylsulfanyl)-D-ribulose 1-phosphate. It functions in the pathway amino-acid biosynthesis; L-methionine biosynthesis via salvage pathway; L-methionine from S-methyl-5-thio-alpha-D-ribose 1-phosphate: step 1/6. Functionally, catalyzes the interconversion of methylthioribose-1-phosphate (MTR-1-P) into methylthioribulose-1-phosphate (MTRu-1-P). The sequence is that of Methylthioribose-1-phosphate isomerase (mri1) from Aspergillus terreus (strain NIH 2624 / FGSC A1156).